The sequence spans 299 residues: Prohibitin-2 (299 aa).

Ala-2 bears the N-acetylalanine mark. The tract at residues 19 to 49 (MGTALKLLLGAGAVAYGIRESVFTVEGGHRA) is necessary for transcriptional repression. Phosphotyrosine is present on Tyr-128. Lys-147 bears the N6-acetyllysine mark. Positions 150 to 174 (ASQLITQRAQVSLLIRRELTERAKD) are necessary for transcriptional repression. A Phosphoserine modification is found at Ser-151. Positions 190-238 (SREYTAAVEAKQVAQQEAQRAQFLVEKAKQEQRQKIVQAEGEAEAARML) form a coiled coil. N6-acetyllysine is present on residues Lys-200, Lys-250, and Lys-262.

This sequence belongs to the prohibitin family. The mitochondrial prohibitin complex consists of two subunits (PHB1 and PHB2), assembled into a membrane-associated ring-shaped supercomplex of approximately 1 mDa. Interacts with ESR1, HDAC1 and HDAC5. Interacts with ZNF703. Interacts with STOML2. Interacts with ARFGEF3. Interacts with SPHK2. Interacts with COX4I1; the interaction associates PHB2 with COX. Interacts with MAP1LC3B (membrane-bound form LC3-II); the interaction is direct and upon mitochondrial depolarization and proteasome-dependent outer membrane rupture. Interacts with IGFBP6 (via C-terminal domain). Interacts with CLPB. Interacts with CD86 (via cytoplasmic domain); the interactions increases after priming with CD40. Interacts with AFG3L2. Interacts with DNAJC19. Interacts with AKT2; this interaction may be important for myogenic differentiation. Phosphorylated. Tyrosine phosphorylation is indirectly stimulated by IGFBP6.

Its subcellular location is the mitochondrion inner membrane. The protein localises to the cytoplasm. It is found in the nucleus. It localises to the cell membrane. Functionally, protein with pleiotropic attributes mediated in a cell-compartment- and tissue-specific manner, which include the plasma membrane-associated cell signaling functions, mitochondrial chaperone, and transcriptional co-regulator of transcription factors and sex steroid hormones in the nucleus. In the mitochondria, together with PHB, forms large ring complexes (prohibitin complexes) in the inner mitochondrial membrane (IMM) and functions as a chaperone protein that stabilizes mitochondrial respiratory enzymes and maintains mitochondrial integrity in the IMM, which is required for mitochondrial morphogenesis, neuronal survival, and normal lifespan. The prohibitin complex, with DNAJC19, regulates cardiolipin remodeling and the protein turnover of OMA1 in a cardiolipin-binding manner. Also regulates cytochrome-c oxidase assembly (COX) and mitochondrial respiration. Binding to sphingoid 1-phosphate (SPP) modulates its regulator activity. Has a key role of mitophagy receptor involved in targeting mitochondria for autophagic degradation. Involved in mitochondrial-mediated antiviral innate immunity, activates RIG-I-mediated signal transduction and production of IFNB1 and pro-inflammatory cytokine IL6. Its function is as follows. In the nucleus, serves as transcriptional co-regulator. Acts as a mediator of transcriptional repression by nuclear hormone receptors via recruitment of histone deacetylases. Functions as an estrogen receptor (ER)-selective coregulator that potentiates the inhibitory activities of antiestrogens and represses the activity of estrogens. Competes with NCOA1 for modulation of ER transcriptional activity. In terms of biological role, in the plasma membrane, is involved in IGFBP6-induced cell migration. Cooperates with CD86 to mediate CD86-signaling in B lymphocytes that regulates the level of IgG1 produced through the activation of distal signaling intermediates. Upon CD40 engagement, required to activate NF-kappa-B signaling pathway via phospholipase C and protein kinase C activation. This Bos taurus (Bovine) protein is Prohibitin-2 (PHB2).